We begin with the raw amino-acid sequence, 240 residues long: Uridylate kinase (240 aa).

13–16 (KLSG) lines the ATP pocket. An involved in allosteric activation by GTP region spans residues 21 to 26 (GEKGFG). Glycine 55 contacts UMP. Glycine 56 and arginine 60 together coordinate ATP. UMP contacts are provided by residues aspartate 75 and 136-143 (IGNPYFST). Positions 164, 170, and 173 each coordinate ATP.

This sequence belongs to the UMP kinase family. Homohexamer.

Its subcellular location is the cytoplasm. It carries out the reaction UMP + ATP = UDP + ADP. Its pathway is pyrimidine metabolism; CTP biosynthesis via de novo pathway; UDP from UMP (UMPK route): step 1/1. Allosterically activated by GTP. Inhibited by UTP. In terms of biological role, catalyzes the reversible phosphorylation of UMP to UDP. This Staphylococcus aureus (strain Newman) protein is Uridylate kinase.